Consider the following 183-residue polypeptide: Probable adenylyl-sulfate kinase (183 aa).

17-24 (GLPGSGKT) contacts ATP. The active-site Phosphoserine intermediate is the S91.

This sequence belongs to the APS kinase family.

It catalyses the reaction adenosine 5'-phosphosulfate + ATP = 3'-phosphoadenylyl sulfate + ADP + H(+). It participates in sulfur metabolism; hydrogen sulfide biosynthesis; sulfite from sulfate: step 2/3. Catalyzes the synthesis of activated sulfate. This chain is Probable adenylyl-sulfate kinase (cysC), found in Aeropyrum pernix (strain ATCC 700893 / DSM 11879 / JCM 9820 / NBRC 100138 / K1).